The primary structure comprises 98 residues: uncharacterized protein (98 aa).

Over residues 19–31 (RRMSKRSKNKAKK) the composition is skewed to basic residues. The interval 19-47 (RRMSKRSKNKAKKERVPVEDRPPTPMPTS) is disordered.

It belongs to the lymphocryptovirus BNLF2B family.

This is an uncharacterized protein from Epstein-Barr virus (strain AG876) (HHV-4).